We begin with the raw amino-acid sequence, 299 residues long: Phosphoribosylaminoimidazole-succinocarboxamide synthase (299 aa).

The disordered stretch occupies residues 259–279 (PESGWDRKSEQPPPPLPQHVV).

The protein belongs to the SAICAR synthetase family.

The catalysed reaction is 5-amino-1-(5-phospho-D-ribosyl)imidazole-4-carboxylate + L-aspartate + ATP = (2S)-2-[5-amino-1-(5-phospho-beta-D-ribosyl)imidazole-4-carboxamido]succinate + ADP + phosphate + 2 H(+). Its pathway is purine metabolism; IMP biosynthesis via de novo pathway; 5-amino-1-(5-phospho-D-ribosyl)imidazole-4-carboxamide from 5-amino-1-(5-phospho-D-ribosyl)imidazole-4-carboxylate: step 1/2. The chain is Phosphoribosylaminoimidazole-succinocarboxamide synthase from Streptomyces avermitilis (strain ATCC 31267 / DSM 46492 / JCM 5070 / NBRC 14893 / NCIMB 12804 / NRRL 8165 / MA-4680).